Here is a 513-residue protein sequence, read N- to C-terminus: Na(+)/H(+) antiporter NhaB (513 aa).

The next 11 helical transmembrane spans lie at 21-41 (LCII…SPFI), 43-63 (GWTL…CYPL), 88-108 (IIAN…IYFM), 137-157 (AAFL…ISVG), 202-222 (LLMH…VGEP), 235-255 (FIEF…CGIA), 299-318 (MAIQ…LHLA), 322-344 (IIGL…HAIG), 350-370 (PMPF…IVDL), 389-409 (LALF…VFVG), and 477-497 (MALP…EYLL).

Belongs to the NhaB Na(+)/H(+) (TC 2.A.34) antiporter family.

It is found in the cell inner membrane. The catalysed reaction is 2 Na(+)(in) + 3 H(+)(out) = 2 Na(+)(out) + 3 H(+)(in). Functionally, na(+)/H(+) antiporter that extrudes sodium in exchange for external protons. The protein is Na(+)/H(+) antiporter NhaB of Haemophilus ducreyi (strain 35000HP / ATCC 700724).